We begin with the raw amino-acid sequence, 319 residues long: Ficolin-2 (319 aa).

An N-terminal signal peptide occupies residues 1–22 (MVLGSAALFVLSLCVTELTLHA). Residues 45 to 101 (GCPGLPGALGPKGEAGAKGDRGESGLPGHPGKAGPTGPKGDRGEKGVRGEKGDTGPS) enclose the Collagen-like domain. Residues 53-106 (LGPKGEAGAKGDRGESGLPGHPGKAGPTGPKGDRGEKGVRGEKGDTGPSQSCAT) form a disordered region. Residues 83–97 (KGDRGEKGVRGEKGD) show a composition bias toward basic and acidic residues. Positions 102–319 (QSCATGPRTC…KVSEMKVRLI (218 aa)) constitute a Fibrinogen C-terminal domain. 2 disulfides stabilise this stretch: cysteine 104-cysteine 132 and cysteine 111-cysteine 139. 3 residues coordinate Ca(2+): aspartate 255, aspartate 257, and serine 261. Cysteine 263 and cysteine 276 are disulfide-bonded. N-linked (GlcNAc...) asparagine glycosylation is present at asparagine 306.

It belongs to the ficolin lectin family. In terms of assembly, homotrimer. Interacts with elastin. Interacts with MASP1 and MASP2.

Its subcellular location is the secreted. May function in innate immunity through activation of the lectin complement pathway. Calcium-dependent and GlcNAc-binding lectin. This Rattus norvegicus (Rat) protein is Ficolin-2 (Fcn2).